A 95-amino-acid polypeptide reads, in one-letter code: Exodeoxyribonuclease 7 small subunit (95 aa).

The span at 62–83 (LTKDESKKTNKTGFRGESKTTE) shows a compositional bias: basic and acidic residues. The interval 62-95 (LTKDESKKTNKTGFRGESKTTETKNNTAQEEDLF) is disordered.

This sequence belongs to the XseB family. In terms of assembly, heterooligomer composed of large and small subunits.

It is found in the cytoplasm. The catalysed reaction is Exonucleolytic cleavage in either 5'- to 3'- or 3'- to 5'-direction to yield nucleoside 5'-phosphates.. Functionally, bidirectionally degrades single-stranded DNA into large acid-insoluble oligonucleotides, which are then degraded further into small acid-soluble oligonucleotides. The polypeptide is Exodeoxyribonuclease 7 small subunit (Leptospira interrogans serogroup Icterohaemorrhagiae serovar copenhageni (strain Fiocruz L1-130)).